We begin with the raw amino-acid sequence, 317 residues long: MATH domain and coiled-coil domain-containing protein At3g58240 (317 aa).

The 126-residue stretch at 6–131 (DNKFTWVIKN…DGEVEIVAQI (126 aa)) folds into the MATH domain. Residues 254-305 (KLDWLEKKLDEVKEIKKKCERVTEMEKELHDLMNKHTNVSKLLEKEKLEIKN) are a coiled coil.

This Arabidopsis thaliana (Mouse-ear cress) protein is MATH domain and coiled-coil domain-containing protein At3g58240.